The sequence spans 318 residues: Protoheme IX farnesyltransferase (318 aa).

A run of 9 helical transmembrane segments spans residues 34-54 (VMSLVVFTAFAGLVLAPGQIN), 55-75 (PVIGFIAILCIAIGAGASGAL), 95-115 (IPAGKILPQEALAFGLTLSAF), 118-138 (IILGLAVNWLAAGLLAFTIFF), 155-175 (IVIGGAAGAFPPMIGWACVTG), 182-202 (IVLFLIIFLWTPAHFWALALF), 228-250 (IVVYALLTALSGICPTLLGFASL), 254-273 (AFATALGLGFIWYSLAVLRM), and 287-307 (FAFSIAYLFAIFSALLVDYMI).

The protein belongs to the UbiA prenyltransferase family. Protoheme IX farnesyltransferase subfamily.

Its subcellular location is the cell inner membrane. It carries out the reaction heme b + (2E,6E)-farnesyl diphosphate + H2O = Fe(II)-heme o + diphosphate. The protein operates within porphyrin-containing compound metabolism; heme O biosynthesis; heme O from protoheme: step 1/1. In terms of biological role, converts heme B (protoheme IX) to heme O by substitution of the vinyl group on carbon 2 of heme B porphyrin ring with a hydroxyethyl farnesyl side group. This is Protoheme IX farnesyltransferase from Sinorhizobium fredii (strain NBRC 101917 / NGR234).